The chain runs to 158 residues: uncharacterized protein (158 aa).

Residues 109 to 143 (RVHARTGLPCPVCGDTVREVSFADKSFQYCPTCQT) form an FPG-type zinc finger.

This is an uncharacterized protein from Mycobacterium tuberculosis (strain ATCC 25618 / H37Rv).